The chain runs to 365 residues: Chorismate synthase (365 aa).

Residue arginine 47 participates in NADP(+) binding. FMN contacts are provided by residues 124–126, glycine 287, 302–306, and arginine 328; these read RAS and KPTAT. The tract at residues 266–290 is disordered; sequence FIKSDDSSKLRTTSNNSGGIQGGIS.

This sequence belongs to the chorismate synthase family. In terms of assembly, homotetramer. FMNH2 serves as cofactor.

It carries out the reaction 5-O-(1-carboxyvinyl)-3-phosphoshikimate = chorismate + phosphate. Its pathway is metabolic intermediate biosynthesis; chorismate biosynthesis; chorismate from D-erythrose 4-phosphate and phosphoenolpyruvate: step 7/7. Its function is as follows. Catalyzes the anti-1,4-elimination of the C-3 phosphate and the C-6 proR hydrogen from 5-enolpyruvylshikimate-3-phosphate (EPSP) to yield chorismate, which is the branch point compound that serves as the starting substrate for the three terminal pathways of aromatic amino acid biosynthesis. This reaction introduces a second double bond into the aromatic ring system. In Prochlorococcus marinus (strain MIT 9301), this protein is Chorismate synthase.